The sequence spans 502 residues: Glycerol kinase (502 aa).

Residue Thr14 coordinates ADP. Residues Thr14, Thr15, and Ser16 each contribute to the ATP site. Sn-glycerol 3-phosphate is bound at residue Thr14. Arg18 contributes to the ADP binding site. 4 residues coordinate sn-glycerol 3-phosphate: Arg84, Glu85, Tyr136, and Asp246. Glycerol-binding residues include Arg84, Glu85, Tyr136, Asp246, and Gln247. ADP is bound by residues Thr268 and Gly311. Positions 268, 311, 315, and 412 each coordinate ATP. 2 residues coordinate ADP: Gly412 and Asn416.

Belongs to the FGGY kinase family. In terms of assembly, homotetramer and homodimer (in equilibrium). Heterodimer with EIIA-Glc. Binds 1 zinc ion per glycerol kinase EIIA-Glc dimer. The zinc ion is important for dimerization.

It catalyses the reaction glycerol + ATP = sn-glycerol 3-phosphate + ADP + H(+). It functions in the pathway polyol metabolism; glycerol degradation via glycerol kinase pathway; sn-glycerol 3-phosphate from glycerol: step 1/1. Activity of this regulatory enzyme is affected by several metabolites. Allosterically and non-competitively inhibited by fructose 1,6-bisphosphate (FBP) and unphosphorylated phosphocarrier protein EIIA-Glc (III-Glc), an integral component of the bacterial phosphotransferase (PTS) system. Its function is as follows. Key enzyme in the regulation of glycerol uptake and metabolism. Catalyzes the phosphorylation of glycerol to yield sn-glycerol 3-phosphate. This is Glycerol kinase from Salmonella typhimurium (strain LT2 / SGSC1412 / ATCC 700720).